We begin with the raw amino-acid sequence, 81 residues long: UPF0248 protein SSO2687 (81 aa).

This sequence belongs to the UPF0248 family.

The chain is UPF0248 protein SSO2687 from Saccharolobus solfataricus (strain ATCC 35092 / DSM 1617 / JCM 11322 / P2) (Sulfolobus solfataricus).